The sequence spans 582 residues: Aspartate--tRNA(Asp/Asn) ligase (582 aa).

Glutamate 177 serves as a coordination point for L-aspartate. Positions 201–204 (QLFK) are aspartate. Residue arginine 223 coordinates L-aspartate. Residues 223-225 (RDE) and glutamine 232 contribute to the ATP site. Histidine 447 serves as a coordination point for L-aspartate. Glutamate 481 is an ATP binding site. L-aspartate is bound at residue arginine 488. Residue 533 to 536 (GLDR) coordinates ATP.

This sequence belongs to the class-II aminoacyl-tRNA synthetase family. Type 1 subfamily. As to quaternary structure, homodimer.

The protein localises to the cytoplasm. It catalyses the reaction tRNA(Asx) + L-aspartate + ATP = L-aspartyl-tRNA(Asx) + AMP + diphosphate. In terms of biological role, aspartyl-tRNA synthetase with relaxed tRNA specificity since it is able to aspartylate not only its cognate tRNA(Asp) but also tRNA(Asn). Reaction proceeds in two steps: L-aspartate is first activated by ATP to form Asp-AMP and then transferred to the acceptor end of tRNA(Asp/Asn). The chain is Aspartate--tRNA(Asp/Asn) ligase from Chlamydia muridarum (strain MoPn / Nigg).